The chain runs to 266 residues: Oxidoreductase aflX (266 aa).

This sequence belongs to the avfA family.

The protein operates within mycotoxin biosynthesis; aflatoxin biosynthesis. Its function is as follows. Oxidoreductase; part of the gene cluster that mediates the biosynthesis of aflatoxins, a group of polyketide-derived furanocoumarins, and part of the most toxic and carcinogenic compounds among the known mycotoxins. The four major aflatoxins produced by A.parasiticus are aflatoxin B1 (AFB1), aflatoxin B2 (AFB2), aflatoxin G1 (AFG1) and aflatoxin G2 (AFG2). Within the aflatoxin pathway, the oxidoreductase aflX seems to be involved in the conversion of versicolorin A (VERA) to demethylsterigmatocystin (DMST), through probable epoxide ring-opening step following versicolorin A oxidation required for the formation of the xanthone ring. The biosynthesis of aflatoxins begins with the norsolorinic acid synthase aflC that combines a hexanoyl starter unit produced by the fatty acid synthase aflA/aflB and 7 malonyl-CoA extender units to synthesize the precursor NOR. The second step is the conversion of NOR to averantin and requires the norsolorinic acid ketoreductase aflD, which catalyzes the dehydration of norsolorinic acid to form (1'S)-averantin. The norsolorinic acid reductases aflE and aflF may also play a role in the conversion of NOR to AVN. The cytochrome P450 monooxygenase aflG then catalyzes the hydroxylation of AVN to 5'hydroxyaverantin (HAVN). The next step is performed by the 5'-hydroxyaverantin dehydrogenase aflH that transforms HAVN to 5'-oxoaverantin (OAVN) which is further converted to averufin (AVF) by aflK that plays a dual role in the pathway, as a 5'-oxoaverantin cyclase that mediates conversion of 5'-oxoaverantin, as well as a versicolorin B synthase in a later step in the pathway. The averufin oxidase aflI catalyzes the conversion of AVF to versiconal hemiacetal acetate (VHA). VHA is then the substrate for the versiconal hemiacetal acetate esterase aflJ to yield versiconal (VAL). Versicolorin B synthase aflK then converts VAL to versicolorin B (VERB) by closing the bisfuran ring of aflatoxin which is required for DNA-binding, thus giving to aflatoxin its activity as a mutagen. Then, the activity of the versicolorin B desaturase aflL leads to versicolorin A (VERA). A branch point starts from VERB since it can also be converted to dihydrodemethylsterigmatocystin (DMDHST), probably also by aflL, VERA being a precursor for aflatoxins B1 and G1, and DMDHST for aflatoxins B2 and G2. Next, the versicolorin reductase aflM and the cytochrome P450 monooxygenase aflN are involved in conversion of VERA to demethylsterigmatocystin (DMST). AflX and aflY seem also involved in this step, through probable aflX-mediated epoxide ring-opening step following versicolorin A oxidation and aflY-mediated Baeyer-Villiger oxidation required for the formation of the xanthone ring. The methyltransferase aflO then leads to the modification of DMST to sterigmatocystin (ST), and of DMDHST to dihydrosterigmatocystin (DHST). Both ST and DHST are then substrates of the O-methyltransferase aflP to yield O-methylsterigmatocystin (OMST) and dihydro-O-methylsterigmatocystin (DHOMST), respectively. Finally OMST is converted to aflatoxins B1 and G1, and DHOMST to aflatoxins B2 and G2, via the action of several enzymes including O-methylsterigmatocystin oxidoreductase aflQ, the cytochrome P450 monooxygenase aflU, but also the NADH-dependent flavin oxidoreductase nadA which is specifically required for the synthesis of AFG1. This Aspergillus parasiticus (strain ATCC 56775 / NRRL 5862 / SRRC 143 / SU-1) protein is Oxidoreductase aflX.